A 266-amino-acid polypeptide reads, in one-letter code: Type III pantothenate kinase (266 aa).

6-13 (DAGNTNIV) is an ATP binding site. 107–110 (GADR) contacts substrate. The active-site Proton acceptor is the Asp109. Asp129 lines the K(+) pocket. Thr132 lines the ATP pocket. Thr184 provides a ligand contact to substrate.

It belongs to the type III pantothenate kinase family. As to quaternary structure, homodimer. Requires NH4(+) as cofactor. K(+) is required as a cofactor.

It localises to the cytoplasm. It catalyses the reaction (R)-pantothenate + ATP = (R)-4'-phosphopantothenate + ADP + H(+). Its pathway is cofactor biosynthesis; coenzyme A biosynthesis; CoA from (R)-pantothenate: step 1/5. Its function is as follows. Catalyzes the phosphorylation of pantothenate (Pan), the first step in CoA biosynthesis. In Acidiphilium cryptum (strain JF-5), this protein is Type III pantothenate kinase.